Reading from the N-terminus, the 752-residue chain is RNA-directed RNA polymerase catalytic subunit (752 aa).

Short sequence motifs (nuclear localization signal) lie at residues 187 to 195 and 203 to 216; these read IKKKLPAKN and RIPM…TRVE. The promoter-binding site stretch occupies residues 249–256; that stretch reads RGFVLVVE. The RdRp catalytic domain maps to 286-482; the sequence is VAKMLSNCPP…GINMSKKKSY (197 aa).

This sequence belongs to the influenza viruses polymerase PB1 family. Influenza RNA polymerase is composed of three subunits: PB1, PB2 and PA. Interacts (via N-terminus) with PA (via C-terminus). Interacts (via C-terminus) with PB2 (via N-terminus); this interaction is essential for transcription initiation. In terms of processing, phosphorylated by host PRKCA.

The protein localises to the host nucleus. It localises to the host cytoplasm. It carries out the reaction RNA(n) + a ribonucleoside 5'-triphosphate = RNA(n+1) + diphosphate. Its function is as follows. RNA-dependent RNA polymerase which is responsible for replication and transcription of virus RNA segments. The transcription of viral mRNAs occurs by a unique mechanism called cap-snatching. 5' methylated caps of cellular mRNAs are cleaved after 10-13 nucleotides by PA. In turn, these short capped RNAs are used as primers by PB1 for transcription of viral mRNAs. During virus replication, PB1 initiates RNA synthesis and copy vRNA into complementary RNA (cRNA) which in turn serves as a template for the production of more vRNAs. This chain is RNA-directed RNA polymerase catalytic subunit, found in Homo sapiens (Human).